A 400-amino-acid chain; its full sequence is Dual specificity mitogen-activated protein kinase kinase 2 (400 aa).

Residue Met-1 is modified to N-acetylmethionine. Phosphoserine is present on Ser-23. Positions Phe-72–Ile-369 constitute a Protein kinase domain. Residues Leu-78–Val-86 and Lys-101 contribute to the ATP site. The active-site Proton acceptor is the Asp-194. Residues Ser-222 and Ser-226 each carry the phosphoserine; by RAF modification. The interval Pro-282–Met-310 is disordered. Ser-293, Ser-295, and Ser-306 each carry phosphoserine. Phosphothreonine occurs at positions 394 and 396.

Belongs to the protein kinase superfamily. STE Ser/Thr protein kinase family. MAP kinase kinase subfamily. Interacts with MORG1. Interacts with SGK1. Interacts with KSR1. Interacts with KSR1 and BRAF; the interaction with KSR1 mediates KSR1-BRAF dimerization. Interacts with GLS. Mg(2+) serves as cofactor. In terms of processing, MAPKK is itself dependent on Ser/Thr phosphorylation for activity catalyzed by MAP kinase kinase kinases (RAF or MEKK1). Phosphorylated by MAP2K1/MEK1. Expressed abundantly in the adult brain and muscle.

It localises to the cytoplasm. It is found in the membrane. It carries out the reaction L-seryl-[protein] + ATP = O-phospho-L-seryl-[protein] + ADP + H(+). The catalysed reaction is L-threonyl-[protein] + ATP = O-phospho-L-threonyl-[protein] + ADP + H(+). It catalyses the reaction L-tyrosyl-[protein] + ATP = O-phospho-L-tyrosyl-[protein] + ADP + H(+). Catalyzes the concomitant phosphorylation of a threonine and a tyrosine residue in a Thr-Glu-Tyr sequence located in MAP kinases. Activates the ERK1 and ERK2 MAP kinases. Activates BRAF in a KSR1 or KSR2-dependent manner; by binding to KSR1 or KSR2 releases the inhibitory intramolecular interaction between KSR1 or KSR2 protein kinase and N-terminal domains which promotes KSR1 or KSR2-BRAF dimerization and BRAF activation. The sequence is that of Dual specificity mitogen-activated protein kinase kinase 2 (Map2k2) from Rattus norvegicus (Rat).